Here is a 236-residue protein sequence, read N- to C-terminus: Small ribosomal subunit protein uS5 (236 aa).

One can recognise an S5 DRBM domain in the interval 61–124; that stretch reads ENQEVLDIAL…NYAKLNIIEI (64 aa).

Belongs to the universal ribosomal protein uS5 family. As to quaternary structure, part of the 30S ribosomal subunit. Contacts protein S4.

With S4 and S12 plays an important role in translational accuracy. In Pyrococcus furiosus (strain ATCC 43587 / DSM 3638 / JCM 8422 / Vc1), this protein is Small ribosomal subunit protein uS5.